The primary structure comprises 633 residues: Probable potassium transport system protein Kup 2 (633 aa).

A run of 12 helical transmembrane segments spans residues 18–38 (FLAL…TSPL), 61–81 (LVSL…VLFL), 107–127 (PVLM…DAMI), 143–163 (VAPA…LLLF), 173–193 (VSVF…AAGV), 211–231 (AIGF…AIFL), 255–275 (WFAV…ALVL), 287–307 (LMFP…ATII), 345–365 (IYLP…MLMF), 371–391 (LAPA…ILAF), 402–422 (ALTA…FLGA), and 427–447 (VHHG…MMWT).

Belongs to the HAK/KUP transporter (TC 2.A.72) family.

Its subcellular location is the cell inner membrane. It carries out the reaction K(+)(in) + H(+)(in) = K(+)(out) + H(+)(out). In terms of biological role, transport of potassium into the cell. Likely operates as a K(+):H(+) symporter. This Rhizobium meliloti (strain 1021) (Ensifer meliloti) protein is Probable potassium transport system protein Kup 2.